A 347-amino-acid chain; its full sequence is Protein-glutamate methylesterase/protein-glutamine glutaminase (347 aa).

The region spanning 3-119 (EALVVDDSHF…STELSGHSEE (117 aa)) is the Response regulatory domain. Asp53 carries the 4-aspartylphosphate modification. The disordered stretch occupies residues 132 to 154 (PTAGHDVEMEPASPPDATTSEYA). One can recognise a CheB-type methylesterase domain in the interval 152-346 (EYADNPTLLI…EAIADSIRRT (195 aa)). Residues Ser164, His191, and Asp288 contribute to the active site.

It belongs to the CheB family. In terms of processing, phosphorylated by CheA. Phosphorylation of the N-terminal regulatory domain activates the methylesterase activity.

The protein resides in the cytoplasm. It catalyses the reaction [protein]-L-glutamate 5-O-methyl ester + H2O = L-glutamyl-[protein] + methanol + H(+). The enzyme catalyses L-glutaminyl-[protein] + H2O = L-glutamyl-[protein] + NH4(+). Functionally, involved in the modulation of the chemotaxis system; catalyzes the demethylation of specific methylglutamate residues introduced into the Htr transducer proteins (methyl-accepting chemotaxis proteins) by CheR. Also required for Htr deamidations, at least at a specific glutamine-glutamate pair in HTR-II and a specific aspartate-glutamine pair in Htr4. In Halobacterium salinarum (strain ATCC 29341 / DSM 671 / R1), this protein is Protein-glutamate methylesterase/protein-glutamine glutaminase.